The primary structure comprises 261 residues: Glutamate racemase (261 aa).

Residues 7 to 8 (DS) and 39 to 40 (YG) contribute to the substrate site. The active-site Proton donor/acceptor is the Cys-71. Residue 72 to 73 (NT) coordinates substrate. The active-site Proton donor/acceptor is the Cys-184. Residue 185–186 (TH) coordinates substrate.

This sequence belongs to the aspartate/glutamate racemases family.

The catalysed reaction is L-glutamate = D-glutamate. Its pathway is cell wall biogenesis; peptidoglycan biosynthesis. Its function is as follows. Provides the (R)-glutamate required for cell wall biosynthesis. The sequence is that of Glutamate racemase from Aliarcobacter butzleri (strain RM4018) (Arcobacter butzleri).